Here is a 249-residue protein sequence, read N- to C-terminus: Phycobilisome 27.9 kDa linker polypeptide, phycoerythrin-associated, rod (249 aa).

A PBS-linker domain is found at 2–166 (ASQTILELWP…LDRGPAQIDS (165 aa)). Residues 198-248 (EKRFKILVQGSKFDSPRRISTTEYIVPASKMTPQIQRINRTSGKIVSITEI) form the CpcD-like domain.

Belongs to the phycobilisome linker protein family. The phycobilisome is a hemidiscoidal structure that is composed of two distinct substructures: a core complex and six rods radiating from the core.

The protein resides in the cellular thylakoid membrane. Its function is as follows. Rod linker protein, associated with phycoerythrin. Linker polypeptides determine the state of aggregation and the location of the disk-shaped phycobiliprotein units within the phycobilisome and modulate their spectroscopic properties in order to mediate a directed and optimal energy transfer. This chain is Phycobilisome 27.9 kDa linker polypeptide, phycoerythrin-associated, rod (cpeD), found in Microchaete diplosiphon (Fremyella diplosiphon).